The primary structure comprises 335 residues: Ketol-acid reductoisomerase (NADP(+)) (335 aa).

The region spanning S5 to T185 is the KARI N-terminal Rossmann domain. NADP(+) is bound by residues Y28 to Q31, S56, and D86 to Q89. The active site involves H111. G137 is an NADP(+) binding site. A KARI C-terminal knotted domain is found at T186–G331. Mg(2+)-binding residues include D194, E198, E230, and E234. S255 contributes to the substrate binding site.

This sequence belongs to the ketol-acid reductoisomerase family. Mg(2+) is required as a cofactor.

It carries out the reaction (2R)-2,3-dihydroxy-3-methylbutanoate + NADP(+) = (2S)-2-acetolactate + NADPH + H(+). The catalysed reaction is (2R,3R)-2,3-dihydroxy-3-methylpentanoate + NADP(+) = (S)-2-ethyl-2-hydroxy-3-oxobutanoate + NADPH + H(+). The protein operates within amino-acid biosynthesis; L-isoleucine biosynthesis; L-isoleucine from 2-oxobutanoate: step 2/4. Its pathway is amino-acid biosynthesis; L-valine biosynthesis; L-valine from pyruvate: step 2/4. Involved in the biosynthesis of branched-chain amino acids (BCAA). Catalyzes an alkyl-migration followed by a ketol-acid reduction of (S)-2-acetolactate (S2AL) to yield (R)-2,3-dihydroxy-isovalerate. In the isomerase reaction, S2AL is rearranged via a Mg-dependent methyl migration to produce 3-hydroxy-3-methyl-2-ketobutyrate (HMKB). In the reductase reaction, this 2-ketoacid undergoes a metal-dependent reduction by NADPH to yield (R)-2,3-dihydroxy-isovalerate. This is Ketol-acid reductoisomerase (NADP(+)) from Saccharolobus islandicus (strain Y.G.57.14 / Yellowstone #1) (Sulfolobus islandicus).